The following is a 151-amino-acid chain: Shadow of prion protein (151 aa).

A signal peptide spans 1–24 (MNWAPATCWALLLAAAFLCDSGAA). Residues 89–113 (WRRAAGPGERGLEDEEDGVPGGNGT) form a disordered region. Asn111 carries N-linked (GlcNAc...) asparagine glycosylation. Residue Gly126 is the site of GPI-anchor amidated glycine attachment. Positions 127 to 151 (AGPTRGPRLCLVLGGALGALGLLRP) are cleaved as a propeptide — removed in mature form.

This sequence belongs to the SPRN family. N-glycosylated. Mainly expressed in brain. In brain, it is expressed in hippocampus.

The protein localises to the cell membrane. Its function is as follows. Prion-like protein that has PrP(C)-like neuroprotective activity. May act as a modulator for the biological actions of normal and abnormal PrP. This Homo sapiens (Human) protein is Shadow of prion protein (SPRN).